Here is a 185-residue protein sequence, read N- to C-terminus: Translocon-associated protein subunit gamma (185 aa).

At Met-1 the chain carries N-acetylmethionine. The Lumenal portion of the chain corresponds to 1-27 (MAPKGSCKQQSEEDLLLQDFSRNLSAK). Ser-11 carries the post-translational modification Phosphoserine. Residues 28 to 48 (SSALFFGNAFIVSAIPIWLYW) form a helical membrane-spanning segment. Residues 49 to 54 (RIWHMD) are Cytoplasmic-facing. A helical transmembrane segment spans residues 55 to 76 (LIQSAVLYSVMTLVSTYLVAFA). Topologically, residues 77-135 (YKNVKFVLKHKVAQKREDAVSKEVTRKLSEADNRKMSRKEKDERILWKKNEVADYEATT) are lumenal. Ser-105 bears the Phosphoserine mark. The helical transmembrane segment at 136–157 (FSIFYNNTLFLVVVIVASFFIL) threads the bilayer. At 158–163 (KNFNPT) the chain is on the cytoplasmic side. Residues 164 to 184 (VNYILSISASSGLIALLSTGS) form a helical membrane-spanning segment.

This sequence belongs to the TRAP-gamma family. Heterotetramer of TRAP-alpha, TRAP-beta, TRAP-delta and TRAP-gamma.

It is found in the endoplasmic reticulum membrane. In terms of biological role, TRAP proteins are part of a complex whose function is to bind calcium to the ER membrane and thereby regulate the retention of ER resident proteins. This chain is Translocon-associated protein subunit gamma (SSR3), found in Pongo abelii (Sumatran orangutan).